The primary structure comprises 493 residues: Xaa-Pro dipeptidase (493 aa).

Ala-2 carries the N-acetylalanine modification. At Ser-167 the chain carries Phosphoserine. His-255 contributes to the a dipeptide binding site. Mn(2+) is bound by residues Asp-276, Asp-287, and His-370. Asp-287 provides a ligand contact to a dipeptide. The a dipeptide site is built by His-377 and Arg-398. 2 residues coordinate Mn(2+): Glu-412 and Glu-452.

It belongs to the peptidase M24B family. Eukaryotic-type prolidase subfamily. In terms of assembly, homodimer. Requires Mn(2+) as cofactor.

The catalysed reaction is Xaa-L-Pro dipeptide + H2O = an L-alpha-amino acid + L-proline. Dipeptidase that catalyzes the hydrolysis of dipeptides with a prolyl (Xaa-Pro) or hydroxyprolyl residue in the C-terminal position. The preferred dipeptide substrate is Gly-Pro, but other Xaa-Pro dipeptides, such as Ala-Pro, Met-Pro, Phe-Pro, Val-Pro and Leu-Pro, can be cleaved. Plays an important role in collagen metabolism because the high level of iminoacids in collagen. The sequence is that of Xaa-Pro dipeptidase (PEPD) from Pongo abelii (Sumatran orangutan).